Reading from the N-terminus, the 748-residue chain is Rho GTPase-activating protein 24 (748 aa).

One can recognise a PH domain in the interval 18–124 (NATKCGWLRK…WVKSIRRVIW (107 aa)). Positions 134 to 328 (QKLEDTVRYE…VMISKHDRLF (195 aa)) constitute a Rho-GAP domain. A disordered region spans residues 328 to 476 (FPKDTEPQSK…SSGTKMGTHS (149 aa)). Polar residues-rich tracts occupy residues 335–347 (QSKP…SNNN) and 356–368 (GQLQ…NTKE). Ser369, Ser391, Ser396, Ser398, Ser402, Ser413, Ser415, and Ser437 each carry phosphoserine. Residues 369–381 (SPVRRCSWDKPES) show a composition bias toward basic and acidic residues. The span at 382–405 (PQRSSMDNGSPTALSGSKTNSPRN) shows a compositional bias: polar residues. A compositionally biased stretch (polar residues) spans 432-476 (IVTNGSFSSSNAEGVEKTQTTPNGSLQARRTSSLKSSGTKMGTHS). At Thr452 the chain carries Phosphothreonine. Ser495 carries the post-translational modification Phosphoserine. The interval 582–640 (DFYGGNFEDPVLDGPPQDDLSHPGDYENKSDRRSVGGRSSRATSSSDNSETFVGNTSSN) is disordered. A compositionally biased stretch (basic and acidic residues) spans 600–615 (DLSHPGDYENKSDRRS). Residues 617 to 630 (GGRSSRATSSSDNS) show a composition bias toward low complexity. A compositionally biased stretch (polar residues) spans 631–640 (ETFVGNTSSN). Residues 649 to 729 (SSLKQEMTKQ…KEMEQFFSTF (81 aa)) are a coiled coil.

As to quaternary structure, interacts with FLNA. Post-translationally, phosphorylated by ROCK, leading to activate the RacGAP activity.

Its subcellular location is the cytoplasm. The protein localises to the cytoskeleton. The protein resides in the cell junction. It localises to the adherens junction. It is found in the focal adhesion. Its subcellular location is the cell projection. In terms of biological role, rho GTPase-activating protein involved in cell polarity, cell morphology and cytoskeletal organization. Acts as a GTPase activator for the Rac-type GTPase by converting it to an inactive GDP-bound state. Controls actin remodeling by inactivating Rac downstream of Rho leading to suppress leading edge protrusion and promotes cell retraction to achieve cellular polarity. Able to suppress RAC1 and CDC42 activity in vitro. Overexpression induces cell rounding with partial or complete disruption of actin stress fibers and formation of membrane ruffles, lamellipodia, and filopodia. Isoform 2 is a vascular cell-specific GAP involved in modulation of angiogenesis. The protein is Rho GTPase-activating protein 24 (Arhgap24) of Rattus norvegicus (Rat).